A 449-amino-acid chain; its full sequence is Deoxyguanosinetriphosphate triphosphohydrolase-like protein (449 aa).

Residues 1–27 (MTSSVWQERRHGEDKQRRNDHRSPYQR) form a disordered region. A compositionally biased stretch (basic and acidic residues) spans 7–27 (QERRHGEDKQRRNDHRSPYQR). In terms of domain architecture, HD spans 59-255 (RLTHSLEVSQ…MELADDIAYA (197 aa)).

The protein belongs to the dGTPase family. Type 2 subfamily.

This chain is Deoxyguanosinetriphosphate triphosphohydrolase-like protein, found in Shewanella baltica (strain OS185).